The sequence spans 566 residues: Transcriptional regulatory protein XylR (566 aa).

In terms of domain architecture, Sigma-54 factor interaction spans 235-464 (GIGHSPAYKR…LENALERGVI (230 aa)). ATP is bound by residues 263–270 (GETGVGKE) and 326–335 (ANGGTIFLDE). Positions 534–553 (ISQAARLLGLTRPAMAYRLK) form a DNA-binding region, H-T-H motif.

Regulatory protein of the TOL plasmid xyl operons. In the presence of m-xylene or m-methylbenzyl alcohol XylR activates both the xylCMABN operon and the regulatory gene xylS; xylS itself activates the xylXYZLTEGFJQKIH operon. XylR interacts with sigma-54. In Pseudomonas putida (Arthrobacter siderocapsulatus), this protein is Transcriptional regulatory protein XylR (xylR).